Consider the following 360-residue polypeptide: 3-dehydroquinate synthase (360 aa).

Residues 70–75 (DGEKYK), 104–108 (GVIGD), 128–129 (TT), Lys-141, and Lys-150 each bind NAD(+). Zn(2+) is bound by residues Glu-183, His-246, and His-263.

Belongs to the sugar phosphate cyclases superfamily. Dehydroquinate synthase family. The cofactor is Co(2+). Zn(2+) serves as cofactor. Requires NAD(+) as cofactor.

The protein localises to the cytoplasm. It catalyses the reaction 7-phospho-2-dehydro-3-deoxy-D-arabino-heptonate = 3-dehydroquinate + phosphate. Its pathway is metabolic intermediate biosynthesis; chorismate biosynthesis; chorismate from D-erythrose 4-phosphate and phosphoenolpyruvate: step 2/7. Functionally, catalyzes the conversion of 3-deoxy-D-arabino-heptulosonate 7-phosphate (DAHP) to dehydroquinate (DHQ). This chain is 3-dehydroquinate synthase, found in Acinetobacter baumannii (strain SDF).